The sequence spans 487 residues: N-succinylglutamate 5-semialdehyde dehydrogenase (487 aa).

221–226 (GSSRTG) provides a ligand contact to NAD(+). Catalysis depends on residues glutamate 244 and cysteine 278.

It belongs to the aldehyde dehydrogenase family. AstD subfamily.

It catalyses the reaction N-succinyl-L-glutamate 5-semialdehyde + NAD(+) + H2O = N-succinyl-L-glutamate + NADH + 2 H(+). It participates in amino-acid degradation; L-arginine degradation via AST pathway; L-glutamate and succinate from L-arginine: step 4/5. In terms of biological role, catalyzes the NAD-dependent reduction of succinylglutamate semialdehyde into succinylglutamate. The protein is N-succinylglutamate 5-semialdehyde dehydrogenase of Pseudomonas putida (strain W619).